Consider the following 528-residue polypeptide: Tyrosine--tRNA ligase, cytoplasmic (528 aa).

Tyr-39 lines the L-tyrosine pocket. Positions 44 to 52 (TTGKPHVAY) match the 'HIGH' region motif. Positions 166, 170, 173, and 188 each coordinate L-tyrosine. The 'KMSKS' region motif lies at 222–226 (KMSSS). A Nuclear localization signal motif is present at residues 242–247 (KKKLKK). Residues 335–364 (KLSNDAYPGASKQKTVPKGSTKNSGPEEID) are disordered. A compositionally biased stretch (polar residues) spans 346–358 (KQKTVPKGSTKNS). Residues 364-468 (DPSLLDLRVG…TGSAPGERIY (105 aa)) enclose the tRNA-binding domain.

This sequence belongs to the class-I aminoacyl-tRNA synthetase family. Homodimer.

The protein localises to the cytoplasm. Its subcellular location is the nucleus. It catalyses the reaction tRNA(Tyr) + L-tyrosine + ATP = L-tyrosyl-tRNA(Tyr) + AMP + diphosphate + H(+). Functionally, catalyzes the attachment of tyrosine to tRNA(Tyr) in a two-step reaction: tyrosine is first activated by ATP to form Tyr-AMP and then transferred to the acceptor end of tRNA(Tyr). The protein is Tyrosine--tRNA ligase, cytoplasmic (yars1) of Xenopus tropicalis (Western clawed frog).